Consider the following 192-residue polypeptide: Peptidyl-tRNA hydrolase (192 aa).

A tRNA-binding site is contributed by Tyr17. Catalysis depends on His22, which acts as the Proton acceptor. Residues Tyr68, Asn70, and Asn116 each coordinate tRNA.

The protein belongs to the PTH family. As to quaternary structure, monomer.

The protein resides in the cytoplasm. The catalysed reaction is an N-acyl-L-alpha-aminoacyl-tRNA + H2O = an N-acyl-L-amino acid + a tRNA + H(+). Functionally, hydrolyzes ribosome-free peptidyl-tRNAs (with 1 or more amino acids incorporated), which drop off the ribosome during protein synthesis, or as a result of ribosome stalling. In terms of biological role, catalyzes the release of premature peptidyl moieties from peptidyl-tRNA molecules trapped in stalled 50S ribosomal subunits, and thus maintains levels of free tRNAs and 50S ribosomes. The polypeptide is Peptidyl-tRNA hydrolase (Mycobacterium sp. (strain JLS)).